We begin with the raw amino-acid sequence, 619 residues long: Dihydroxy-acid dehydratase (619 aa).

Asp-81 contributes to the Mg(2+) binding site. Cys-122 is a binding site for [2Fe-2S] cluster. The Mg(2+) site is built by Asp-123 and Lys-124. Lys-124 carries the post-translational modification N6-carboxylysine. Residue Cys-195 participates in [2Fe-2S] cluster binding. Position 494 (Glu-494) interacts with Mg(2+). Ser-520 functions as the Proton acceptor in the catalytic mechanism.

Belongs to the IlvD/Edd family. As to quaternary structure, homodimer. The cofactor is [2Fe-2S] cluster. Mg(2+) is required as a cofactor.

The enzyme catalyses (2R)-2,3-dihydroxy-3-methylbutanoate = 3-methyl-2-oxobutanoate + H2O. It catalyses the reaction (2R,3R)-2,3-dihydroxy-3-methylpentanoate = (S)-3-methyl-2-oxopentanoate + H2O. Its pathway is amino-acid biosynthesis; L-isoleucine biosynthesis; L-isoleucine from 2-oxobutanoate: step 3/4. The protein operates within amino-acid biosynthesis; L-valine biosynthesis; L-valine from pyruvate: step 3/4. Functions in the biosynthesis of branched-chain amino acids. Catalyzes the dehydration of (2R,3R)-2,3-dihydroxy-3-methylpentanoate (2,3-dihydroxy-3-methylvalerate) into 2-oxo-3-methylpentanoate (2-oxo-3-methylvalerate) and of (2R)-2,3-dihydroxy-3-methylbutanoate (2,3-dihydroxyisovalerate) into 2-oxo-3-methylbutanoate (2-oxoisovalerate), the penultimate precursor to L-isoleucine and L-valine, respectively. This is Dihydroxy-acid dehydratase from Shewanella sp. (strain MR-4).